The sequence spans 696 residues: DNA ligase (696 aa).

Residues 41-45, 90-91, and Glu120 each bind NAD(+); these read DGQYD and SL. Lys122 serves as the catalytic N6-AMP-lysine intermediate. 4 residues coordinate NAD(+): Arg143, Glu180, Lys296, and Lys320. Residues Cys414, Cys417, Cys433, and Cys439 each coordinate Zn(2+). Positions 603 to 692 constitute a BRCT domain; sequence STPRTLEGLT…PDAVARPAEE (90 aa).

The protein belongs to the NAD-dependent DNA ligase family. LigA subfamily. The cofactor is Mg(2+). Requires Mn(2+) as cofactor.

The enzyme catalyses NAD(+) + (deoxyribonucleotide)n-3'-hydroxyl + 5'-phospho-(deoxyribonucleotide)m = (deoxyribonucleotide)n+m + AMP + beta-nicotinamide D-nucleotide.. Functionally, DNA ligase that catalyzes the formation of phosphodiester linkages between 5'-phosphoryl and 3'-hydroxyl groups in double-stranded DNA using NAD as a coenzyme and as the energy source for the reaction. It is essential for DNA replication and repair of damaged DNA. In Kineococcus radiotolerans (strain ATCC BAA-149 / DSM 14245 / SRS30216), this protein is DNA ligase.